Reading from the N-terminus, the 253-residue chain is Small ribosomal subunit protein eS4 (253 aa).

One can recognise an S4 RNA-binding domain in the interval 43–114 (LPLLLIVRNV…YPVKFFKLHP (72 aa)).

The protein belongs to the eukaryotic ribosomal protein eS4 family.

The chain is Small ribosomal subunit protein eS4 (rps4e) from Aeropyrum pernix (strain ATCC 700893 / DSM 11879 / JCM 9820 / NBRC 100138 / K1).